The chain runs to 593 residues: Potassium channel KAT6 (593 aa).

The Cytoplasmic segment spans residues 1-33; it reads MAASRSELLRPAFGEPSPSLGPFVVNPHTCSYR. A helical membrane pass occupies residues 34-54; sequence WWQKFLIVLVLYTAWASPFEL. Over 55–64 the chain is Extracellular; sequence AMEKSASAAL. The chain crosses the membrane as a helical span at residues 65–85; that stretch reads AVTELVVDAFFAVDIAVSFFV. Residues 86–106 are Cytoplasmic-facing; sequence AYRDASTGLLVTDRKKIATRH. The chain crosses the membrane as a helical span at residues 107–129; sequence LARPCLALDVASTIPLQMIYRIV. Residues 130 to 138 are Extracellular-facing; the sequence is SGKRQALYG. Residues 139–159 form a helical; Voltage-sensor membrane-spanning segment; it reads LLNLLRLWRLRRVSKLFARLE. Topologically, residues 160-173 are cytoplasmic; that stretch reads KDIRFSYLWTRLIK. The helical transmembrane segment at 174-194 threads the bilayer; that stretch reads LLYVTLFAVHFASCIYLWMAF. The Extracellular portion of the chain corresponds to 195-221; sequence HHKAKELTWIGSQFHGFEDRSVWFCYT. Positions 222 to 241 form an intramembrane region, pore-forming; that stretch reads CAVYWSITTLATVGYGDLHA. At 242-247 the chain is on the extracellular side; it reads ANTGEM. Residues 248-268 form a helical membrane-spanning segment; that stretch reads LFSIAFMLFNMGLTSYIIGNI. At 269-593 the chain is on the cytoplasmic side; sequence TNLVVHETTN…RDGDHLFFSW (325 aa). 350–470 contributes to the a nucleoside 3',5'-cyclic phosphate binding site; that stretch reads LFQGVSDKLV…VVVFSNFVLY (121 aa). Residues 522-593 enclose the KHA domain; that stretch reads RVSIHEHLLN…RDGDHLFFSW (72 aa).

This sequence belongs to the potassium channel family. Plant (TC 1.A.1.4) subfamily.

The protein localises to the membrane. Its function is as follows. Probable inward-rectifying potassium channel. Assuming opened or closed conformations in response to the voltage difference across the membrane, the channel is activated by hyperpolarization. In Oryza sativa subsp. japonica (Rice), this protein is Potassium channel KAT6.